An 89-amino-acid chain; its full sequence is MAVADINKSEVIKQFARGANDTGSPEVQVALLTTRINELTPHFKANMKDHHSRRGLLRMVSRRRRLLDYLKSNDADRYRALIEKLGLRK.

It belongs to the universal ribosomal protein uS15 family. In terms of assembly, part of the 30S ribosomal subunit. Forms a bridge to the 50S subunit in the 70S ribosome, contacting the 23S rRNA.

One of the primary rRNA binding proteins, it binds directly to 16S rRNA where it helps nucleate assembly of the platform of the 30S subunit by binding and bridging several RNA helices of the 16S rRNA. Functionally, forms an intersubunit bridge (bridge B4) with the 23S rRNA of the 50S subunit in the ribosome. This Cupriavidus necator (strain ATCC 17699 / DSM 428 / KCTC 22496 / NCIMB 10442 / H16 / Stanier 337) (Ralstonia eutropha) protein is Small ribosomal subunit protein uS15.